Here is an 880-residue protein sequence, read N- to C-terminus: Chaperone protein ClpB 1 (880 aa).

The 143-residue stretch at 6-148 (PNKFTDKAWE…EASIKAVRGS (143 aa)) folds into the Clp R domain. Repeat stretches follow at residues 9–74 (FTDK…TQRQ) and 85–148 (LGRS…VRGS). The tract at residues 161–343 (EALQKFGRDL…RRFQQVYVDQ (183 aa)) is NBD1. Residue 208–215 (GEPGVGKT) coordinates ATP. Positions 344-554 (PSVENTISIL…IAEIVAKWTG (211 aa)) are linker. Residues 394–530 (IDLVDEAAAQ…KEAKLLELQS (137 aa)) are a coiled coil. An NBD2 region spans residues 564 to 775 (ERQKLLQLES…RVDDTILFHA (212 aa)). 614–621 (GPTGVGKT) contributes to the ATP binding site. Residues 776–880 (LSRSEMSHII…VKVSVTQITT (105 aa)) form a C-terminal region.

This sequence belongs to the ClpA/ClpB family. As to quaternary structure, homohexamer. The oligomerization is ATP-dependent.

The protein resides in the cytoplasm. Part of a stress-induced multi-chaperone system, it is involved in the recovery of the cell from heat-induced damage, in cooperation with DnaK, DnaJ and GrpE. Acts before DnaK, in the processing of protein aggregates. Protein binding stimulates the ATPase activity; ATP hydrolysis unfolds the denatured protein aggregates, which probably helps expose new hydrophobic binding sites on the surface of ClpB-bound aggregates, contributing to the solubilization and refolding of denatured protein aggregates by DnaK. The sequence is that of Chaperone protein ClpB 1 (clpB1) from Nostoc sp. (strain PCC 7120 / SAG 25.82 / UTEX 2576).